A 409-amino-acid polypeptide reads, in one-letter code: Nucleoprotein (409 aa).

5 disordered regions span residues 1 to 32, 45 to 69, 122 to 145, 164 to 194, and 238 to 259; these read MASG…SSGN, NSHP…QQHG, DVKS…LRFS, RSGR…GSED, and VDQV…DKMN. The span at 15–31 shows a compositional bias: low complexity; it reads PVIKLGGPKPPKVGSSG. The interval 29–160 is RNA-binding; that stretch reads SSGNASWFQA…GNFRWDFIPL (132 aa). The CoV N NTD domain occupies 31–156; it reads GNASWFQAIK…GGPDGNFRWD (126 aa). Residues 122 to 138 show a composition bias toward basic and acidic residues; that stretch reads DVKSRSHQGTRDPDKFD. The segment covering 164 to 179 has biased composition (low complexity); that stretch reads RSGRSTAASSAASSRA. Basic and acidic residues-rich tracts occupy residues 180-192 and 247-259; these read PSRD…RSGS and KGKE…DKMN. S190 and S192 each carry phosphoserine; by host. The region spanning 219 to 331 is the CoV N CTD domain; that stretch reads ADEMAHRRYC…QCVDGVGTRP (113 aa). The tract at residues 226-333 is dimerization; the sequence is RYCKRTIPPG…VDGVGTRPKD (108 aa). Cysteines 320 and 323 form a disulfide. A disordered region spans residues 326–409; that stretch reads GVGTRPKDDE…GDSALGENEL (84 aa). Over residues 341–357 the composition is skewed to low complexity; the sequence is RSSSRPATRTSSPAPRQ. Residues 358 to 367 show a composition bias toward basic residues; that stretch reads QRPKKEKKPK. T378 is subject to Phosphothreonine; by host. S379 bears the Phosphoserine; by host mark.

The protein belongs to the gammacoronavirus nucleocapsid protein family. Homooligomer. Both monomeric and oligomeric forms interact with RNA. Interacts with protein M. Interacts with NSP3; this interaction serves to tether the genome to the newly translated replicase-transcriptase complex at a very early stage of infection. Post-translationally, ADP-ribosylated. The ADP-ribosylation is retained in the virion during infection. Phosphorylated on serine and threonine residues.

Its subcellular location is the virion. It localises to the host endoplasmic reticulum-Golgi intermediate compartment. The protein resides in the host Golgi apparatus. In terms of biological role, packages the positive strand viral genome RNA into a helical ribonucleocapsid (RNP) and plays a fundamental role during virion assembly through its interactions with the viral genome and membrane protein M. Plays an important role in enhancing the efficiency of subgenomic viral RNA transcription as well as viral replication. This is Nucleoprotein from Avian infectious bronchitis virus (strain Arkansas 99) (IBV).